The following is a 113-amino-acid chain: Protein CTLA-2-beta (113 aa).

A run of 2 repeats spans residues 15 to 17 and 18 to 20. A 2 X 3 AA tandem repeats of E-W-K region spans residues 15 to 20; sequence EWKEWK.

The protein to the propeptide regions of cysteine proteases.

Its function is as follows. Not known, expressed in activated T-cell. The protein is Protein CTLA-2-beta (Ctla2b) of Mus musculus (Mouse).